The sequence spans 56 residues: Large ribosomal subunit protein bL32 (56 aa).

The segment at 1-26 (MAVQQNKKSRSKRGMRRSHDALSTAQ) is disordered. A compositionally biased stretch (basic residues) spans 7–16 (KKSRSKRGMR).

It belongs to the bacterial ribosomal protein bL32 family.

This chain is Large ribosomal subunit protein bL32, found in Shewanella amazonensis (strain ATCC BAA-1098 / SB2B).